The sequence spans 777 residues: Aconitate hydratase, mitochondrial (777 aa).

Substrate is bound by residues Gln-96 and 189–191; that span reads DSH. [4Fe-4S] cluster-binding residues include Cys-383, Cys-446, and Cys-449. Substrate is bound by residues Arg-472, Arg-477, Arg-605, and 668-669; that span reads SR.

It belongs to the aconitase/IPM isomerase family. Monomer. [4Fe-4S] cluster serves as cofactor.

It is found in the mitochondrion. It carries out the reaction citrate = D-threo-isocitrate. The protein operates within carbohydrate metabolism; tricarboxylic acid cycle; isocitrate from oxaloacetate: step 2/2. Catalyzes the isomerization of citrate to isocitrate via cis-aconitate, a step in the citric acid cycle. The sequence is that of Aconitate hydratase, mitochondrial (ACO1) from Candida albicans (strain SC5314 / ATCC MYA-2876) (Yeast).